The chain runs to 214 residues: Phosphatidylserine decarboxylase proenzyme (214 aa).

Residue Ser182 is the Schiff-base intermediate with substrate; via pyruvic acid of the active site. Position 182 is a pyruvic acid (Ser); by autocatalysis (Ser182).

This sequence belongs to the phosphatidylserine decarboxylase family. PSD-A subfamily. Heterodimer of a large membrane-associated beta subunit and a small pyruvoyl-containing alpha subunit. Requires pyruvate as cofactor. Post-translationally, is synthesized initially as an inactive proenzyme. Formation of the active enzyme involves a self-maturation process in which the active site pyruvoyl group is generated from an internal serine residue via an autocatalytic post-translational modification. Two non-identical subunits are generated from the proenzyme in this reaction, and the pyruvate is formed at the N-terminus of the alpha chain, which is derived from the carboxyl end of the proenzyme. The post-translation cleavage follows an unusual pathway, termed non-hydrolytic serinolysis, in which the side chain hydroxyl group of the serine supplies its oxygen atom to form the C-terminus of the beta chain, while the remainder of the serine residue undergoes an oxidative deamination to produce ammonia and the pyruvoyl prosthetic group on the alpha chain.

The protein resides in the cell membrane. It carries out the reaction a 1,2-diacyl-sn-glycero-3-phospho-L-serine + H(+) = a 1,2-diacyl-sn-glycero-3-phosphoethanolamine + CO2. Its pathway is phospholipid metabolism; phosphatidylethanolamine biosynthesis; phosphatidylethanolamine from CDP-diacylglycerol: step 2/2. Its function is as follows. Catalyzes the formation of phosphatidylethanolamine (PtdEtn) from phosphatidylserine (PtdSer). The sequence is that of Phosphatidylserine decarboxylase proenzyme from Burkholderia cenocepacia (strain HI2424).